We begin with the raw amino-acid sequence, 50 residues long: Large ribosomal subunit protein bL33B (50 aa).

This sequence belongs to the bacterial ribosomal protein bL33 family.

This Metamycoplasma arthritidis (strain 158L3-1) (Mycoplasma arthritidis) protein is Large ribosomal subunit protein bL33B.